A 940-amino-acid polypeptide reads, in one-letter code: UvrABC system protein A (940 aa).

An ATP-binding site is contributed by Gly-33–Ser-40. The segment at Cys-252–Cys-279 adopts a C4-type zinc-finger fold. ABC transporter domains follow at residues Trp-309–Leu-586 and Ile-606–Lys-935. Gly-639–Ser-646 contacts ATP. The segment at Cys-738 to Cys-764 adopts a C4-type zinc-finger fold.

It belongs to the ABC transporter superfamily. UvrA family. In terms of assembly, forms a heterotetramer with UvrB during the search for lesions.

Its subcellular location is the cytoplasm. Its function is as follows. The UvrABC repair system catalyzes the recognition and processing of DNA lesions. UvrA is an ATPase and a DNA-binding protein. A damage recognition complex composed of 2 UvrA and 2 UvrB subunits scans DNA for abnormalities. When the presence of a lesion has been verified by UvrB, the UvrA molecules dissociate. The polypeptide is UvrABC system protein A (Lactococcus lactis subsp. lactis (strain IL1403) (Streptococcus lactis)).